The chain runs to 409 residues: AT-rich interactive domain-containing protein 3C (409 aa).

Positions 1–14 (MEALQRQQAARLAQ) are enriched in low complexity. Residues 1–91 (MEALQRQQAA…SPSSQSPGIQ (91 aa)) are disordered. Pro residues predominate over residues 19–30 (LAPPRLPLPQPP). Residues 49–70 (AEEEEGAEDEEGETPLAEEETA) are compositionally biased toward acidic residues. The ARID domain occupies 110 to 202 (DPKRKEFLDD…YLYPYECETR (93 aa)). 3 disordered regions span residues 233-274 (NLAG…PAHA), 306-333 (TREKLAPEEPPEKRAVLMGPVDSPRLGA), and 385-409 (PVPASLGPTNPPPLPSTGPPSSTLP). Residues 235-257 (AGPTPRGAPGPASSHGPAPTATP) show a composition bias toward low complexity. The 86-residue stretch at 301-386 (LASEATREKL…GILFARRQPV (86 aa)) folds into the REKLES domain. Basic and acidic residues predominate over residues 306–320 (TREKLAPEEPPEKRA). A compositionally biased stretch (pro residues) spans 393 to 402 (TNPPPLPSTG).

In terms of assembly, interacts (via REKLES DOMAIN) with NPM1; the interaction mediates ARID3C nuclear shuttling.

It is found in the nucleus. Functionally, transcription factor involved in monocyte-to-macrophage differentiation. Forms a complex with NPM1 to translocate to the nucleus, acting as a transcription factor that promotes the expression of the genes involved in macrophage differentiation, such as STAT3, STAT1 and JUNB. The sequence is that of AT-rich interactive domain-containing protein 3C (Arid3c) from Mus musculus (Mouse).